A 217-amino-acid chain; its full sequence is Translation initiation factor IF-3 (217 aa).

A disordered region spans residues 179-217; the sequence is PRKTPLVKKEEKEAAPTKAVRTIPAPPRPTAAKVAAQQA.

This sequence belongs to the IF-3 family. As to quaternary structure, monomer.

It is found in the cytoplasm. In terms of biological role, IF-3 binds to the 30S ribosomal subunit and shifts the equilibrium between 70S ribosomes and their 50S and 30S subunits in favor of the free subunits, thus enhancing the availability of 30S subunits on which protein synthesis initiation begins. The protein is Translation initiation factor IF-3 of Parasynechococcus marenigrum (strain WH8102).